Here is a 572-residue protein sequence, read N- to C-terminus: Glutathione hydrolase 5 proenzyme (572 aa).

At 1 to 6 the chain is on the cytoplasmic side; sequence MAWGHR. The chain crosses the membrane as a helical; Signal-anchor for type II membrane protein span at residues 7 to 29; sequence TTVCLVLLGVSLGLAIIVLAVVL. At 30 to 572 the chain is on the extracellular side; it reads PHHQASCRPD…LRKAGKASGY (543 aa). Asn98 is a glycosylation site (N-linked (GlcNAc...) asparagine). Arg110 provides a ligand contact to L-glutamate. N-linked (GlcNAc...) asparagine glycans are attached at residues Asn185, Asn194, Asn204, Asn277, Asn303, Asn347, and Asn377. The active-site Nucleophile is Thr388. L-glutamate contacts are provided by residues Thr406, Glu427, and 453 to 454; that span reads SS.

Belongs to the gamma-glutamyltransferase family. In terms of assembly, heterodimer composed of the light and heavy chains. The active site is located in the light chain. Cleaved by autocatalysis into a large and a small subunit. Post-translationally, glycosylated. Widely expressed, but at low level, except in the airway epithelial cells. Detected in brain, heart, kidney, liver, lung, spleen, testis and trachea.

The protein localises to the membrane. It catalyses the reaction glutathione + H2O = L-cysteinylglycine + L-glutamate. The enzyme catalyses an S-substituted glutathione + H2O = an S-substituted L-cysteinylglycine + L-glutamate. The catalysed reaction is leukotriene C4 + H2O = leukotriene D4 + L-glutamate. It carries out the reaction S-[(2E,6E,10E)-geranylgeranyl]-L-glutathione + H2O = S-[(2E,6E,10E)-geranylgeranyl]-L-cysteinylglycine + L-glutamate. It catalyses the reaction an N-terminal (5-L-glutamyl)-[peptide] + an alpha-amino acid = 5-L-glutamyl amino acid + an N-terminal L-alpha-aminoacyl-[peptide]. The protein operates within lipid metabolism; leukotriene D4 biosynthesis. It functions in the pathway sulfur metabolism; glutathione metabolism. With respect to regulation, inhibited by serine-borate. Functionally, cleaves the gamma-glutamyl bond of extracellular glutathione tripeptide (gamma-Glu-Cys-Gly) and certain glutathione conjugates. Hydrolyzes glutathione releasing L-Glu and Cys-Gly dipeptide which is further metabolized to maintain extracellular cysteine levels but also to provide cysteine necessary for intracellular glutathione synthesis. Among glutathione-S-conjugates metabolizes leukotriene C4 (LTC4) and S-geranylgeranyl-glutathione (GGG), but is inactive toward gamma-glutamyl leucine. Converts extracellular LTC4 to LTD4 during acute inflammatory response. Acts as a negative regulator of GGG bioactivity. GGT5 (via GGG catabolism) and ABCC1 (via extracellular transport) establish GGG gradients within lymphoid tissues to position P2RY8-positive lymphocytes at germinal centers in lymphoid follicles and restrict their chemotactic transmigration from blood vessels to bone marrow parenchyma. The transpeptidation reaction, i.e. the transfer of gamma-glutamyl moiety to an acceptor molecule to yield a new gamma-glutamyl compound requires high concentration of dipeptide acceptor and is considered nonphysiological. The sequence is that of Glutathione hydrolase 5 proenzyme (Ggt5) from Rattus norvegicus (Rat).